Consider the following 126-residue polypeptide: Profilin-3 (126 aa).

This sequence belongs to the profilin family. In terms of assembly, occurs in many kinds of cells as a complex with monomeric actin in a 1:1 ratio.

The protein localises to the cytoplasm. The protein resides in the cytoskeleton. Functionally, binds to actin and affects the structure of the cytoskeleton. At high concentrations, profilin prevents the polymerization of actin, whereas it enhances it at low concentrations. By binding to PIP2, it inhibits the formation of IP3 and DG. The polypeptide is Profilin-3 (proC) (Dictyostelium discoideum (Social amoeba)).